A 528-amino-acid polypeptide reads, in one-letter code: ADP,ATP carrier protein 1 (528 aa).

A run of 12 helical transmembrane segments spans residues 24–44 (LKKVLPMFLMFFCISFNYTIL), 63–83 (IPFIKLWLVVPSAVVFMLIYA), 93–113 (ALFFAVLSPFVVFFALFPVVI), 124–144 (AFADTLQSILPSGFMGFIAML), 149–169 (FAVFYVLSELWGSVMLSLMFW), 184–204 (FYALFGVGANVALLISGPAII), 220–240 (WGVSLYFLMAMFLCSCAIIAA), 284–304 (YMLLLALLVICYGICINLVEV), 327–347 (FSFWTGVVSVFVMLFIGGNVI), 356–376 (ALVTPIMVLVTGAVFFALVIF), 381–401 (TGLVAALGTTPLMLAVVVGAI), and 463–483 (IGAMTPFLAVALFAIIMVWLT).

This sequence belongs to the ADP/ATP translocase tlc family.

The protein resides in the cell membrane. This Chlamydia trachomatis serovar D (strain ATCC VR-885 / DSM 19411 / UW-3/Cx) protein is ADP,ATP carrier protein 1 (tlcA).